Consider the following 272-residue polypeptide: NH(3)-dependent NAD(+) synthetase (272 aa).

Residue 45-52 (GISGGQDS) participates in ATP binding. Residue Asp51 participates in Mg(2+) binding. Residue Arg138 coordinates deamido-NAD(+). Thr158 is a binding site for ATP. Glu163 provides a ligand contact to Mg(2+). Residues Lys171 and Asp178 each coordinate deamido-NAD(+). Lys187 and Thr209 together coordinate ATP. Position 258–259 (258–259 (HK)) interacts with deamido-NAD(+).

Belongs to the NAD synthetase family. As to quaternary structure, homodimer.

The catalysed reaction is deamido-NAD(+) + NH4(+) + ATP = AMP + diphosphate + NAD(+) + H(+). The protein operates within cofactor biosynthesis; NAD(+) biosynthesis; NAD(+) from deamido-NAD(+) (ammonia route): step 1/1. Catalyzes the ATP-dependent amidation of deamido-NAD to form NAD. Uses ammonia as a nitrogen source. The chain is NH(3)-dependent NAD(+) synthetase from Bacillus cereus (strain G9842).